We begin with the raw amino-acid sequence, 950 residues long: Protein translocase subunit SecA 1 (950 aa).

ATP is bound by residues Q83, 101–105 (GEGKT), and D490. The interval 864–950 (EGGAGRKNAA…AKPPKSVKKR (87 aa)) is disordered. A compositionally biased stretch (basic and acidic residues) spans 873–888 (AAREEAPSRLRAKGIE).

This sequence belongs to the SecA family. Monomer and homodimer. Part of the essential Sec protein translocation apparatus which comprises SecA, SecYEG and auxiliary proteins SecDF. Other proteins may also be involved.

Its subcellular location is the cell membrane. It is found in the cytoplasm. It carries out the reaction ATP + H2O + cellular proteinSide 1 = ADP + phosphate + cellular proteinSide 2.. Part of the Sec protein translocase complex. Interacts with the SecYEG preprotein conducting channel. Has a central role in coupling the hydrolysis of ATP to the transfer of proteins into and across the cell membrane, serving as an ATP-driven molecular motor driving the stepwise translocation of polypeptide chains across the membrane. The sequence is that of Protein translocase subunit SecA 1 from Mycobacterium ulcerans (strain Agy99).